The following is a 289-amino-acid chain: Acetyl-coenzyme A carboxylase carboxyl transferase subunit beta (289 aa).

Residues Met34–Phe289 form the CoA carboxyltransferase N-terminal domain. Zn(2+) is bound by residues Cys38, Cys41, Cys57, and Cys60. A C4-type zinc finger spans residues Cys38 to Cys60.

The protein belongs to the AccD/PCCB family. Acetyl-CoA carboxylase is a heterohexamer composed of biotin carboxyl carrier protein (AccB), biotin carboxylase (AccC) and two subunits each of ACCase subunit alpha (AccA) and ACCase subunit beta (AccD). Zn(2+) is required as a cofactor.

Its subcellular location is the cytoplasm. The catalysed reaction is N(6)-carboxybiotinyl-L-lysyl-[protein] + acetyl-CoA = N(6)-biotinyl-L-lysyl-[protein] + malonyl-CoA. The protein operates within lipid metabolism; malonyl-CoA biosynthesis; malonyl-CoA from acetyl-CoA: step 1/1. In terms of biological role, component of the acetyl coenzyme A carboxylase (ACC) complex. Biotin carboxylase (BC) catalyzes the carboxylation of biotin on its carrier protein (BCCP) and then the CO(2) group is transferred by the transcarboxylase to acetyl-CoA to form malonyl-CoA. The polypeptide is Acetyl-coenzyme A carboxylase carboxyl transferase subunit beta (Clostridium botulinum (strain Langeland / NCTC 10281 / Type F)).